We begin with the raw amino-acid sequence, 327 residues long: Aspartate--ammonia ligase (327 aa).

Belongs to the class-II aminoacyl-tRNA synthetase family. AsnA subfamily.

The protein localises to the cytoplasm. The enzyme catalyses L-aspartate + NH4(+) + ATP = L-asparagine + AMP + diphosphate + H(+). The protein operates within amino-acid biosynthesis; L-asparagine biosynthesis; L-asparagine from L-aspartate (ammonia route): step 1/1. In Bacillus cereus (strain ATCC 10987 / NRS 248), this protein is Aspartate--ammonia ligase.